The chain runs to 1091 residues: Constitutive coactivator of PPAR-gamma-like protein 2 (1091 aa).

Positions 35 to 53 (QQQHLHRQLPPAALAPGAP) are enriched in low complexity. 4 disordered regions span residues 35–105 (QQQH…HPPP), 503–575 (NCLT…SEPH), 966–1010 (SRSS…QGSS), and 1037–1077 (VEEK…KNHV). Arg57 is modified (omega-N-methylarginine). The segment covering 82–95 (SRHHHPAHHFHHHG) has biased composition (basic residues). The span at 532-544 (GSEQITEAVQQQP) shows a compositional bias: polar residues. The segment covering 966–976 (SRSSRSRGSFG) has biased composition (low complexity). The residue at position 972 (Arg972) is an Omega-N-methylarginine. A compositionally biased stretch (basic and acidic residues) spans 1062–1077 (SDDHCLPVKNGEKNHV).

The protein belongs to the constitutive coactivator of PPAR-gamma family.

The chain is Constitutive coactivator of PPAR-gamma-like protein 2 (Fam120c) from Mus musculus (Mouse).